A 94-amino-acid polypeptide reads, in one-letter code: Evasin P1172 (94 aa).

Intrachain disulfides connect Cys35–Cys54, Cys39–Cys56, and Cys50–Cys67. Residues Asn38, Asn44, Asn53, and Asn80 are each glycosylated (N-linked (GlcNAc...) asparagine).

It is found in the secreted. Salivary chemokine-binding protein which binds to host chemokines CXCL1, CXCL2, CXCL5 and CXCL8. The polypeptide is Evasin P1172 (Ixodes ricinus (Common tick)).